We begin with the raw amino-acid sequence, 280 residues long: Ribosomal RNA small subunit methyltransferase A (280 aa).

Asn18, Leu20, Gly45, Glu66, Asp89, and Asn110 together coordinate S-adenosyl-L-methionine.

It belongs to the class I-like SAM-binding methyltransferase superfamily. rRNA adenine N(6)-methyltransferase family. RsmA subfamily.

The protein localises to the cytoplasm. The enzyme catalyses adenosine(1518)/adenosine(1519) in 16S rRNA + 4 S-adenosyl-L-methionine = N(6)-dimethyladenosine(1518)/N(6)-dimethyladenosine(1519) in 16S rRNA + 4 S-adenosyl-L-homocysteine + 4 H(+). Functionally, specifically dimethylates two adjacent adenosines (A1518 and A1519) in the loop of a conserved hairpin near the 3'-end of 16S rRNA in the 30S particle. May play a critical role in biogenesis of 30S subunits. The chain is Ribosomal RNA small subunit methyltransferase A from Cupriavidus necator (strain ATCC 17699 / DSM 428 / KCTC 22496 / NCIMB 10442 / H16 / Stanier 337) (Ralstonia eutropha).